The chain runs to 238 residues: Oxidoreductase dmxR7 (238 aa).

Belongs to the avfA family.

It participates in secondary metabolite biosynthesis. In terms of biological role, oxidoreductase; part of the gene cluster that mediates the biosynthesis of the dimeric xanthones cryptosporioptides. The pathway begins with the synthesis of atrochrysone thioester by the polyketide synthase dmx-nrPKS. The atrochrysone carboxyl ACP thioesterase dmxR1 then breaks the thioester bond and releases the atrochrysone carboxylic acid from dmx-nrPKS. Atrochrysone carboxylic acid is decarboxylated by the decarboxylase dmxR15, and oxidized by the anthrone oxygenase dmxR16 to yield emodin. Emodin is then reduced to emodin hydroquinone by the oxidoreductase dmxR7. A-ring reduction by the short chain dehydrogenase dmxR18, dehydration by the scytalone dehydratase-like protein dmxR17 and probable spontaneous re-oxidation, results in overall deoxygenation to chrysophanol. Baeyer-Villiger oxidation by the Baeyer-Villiger monooxygenase (BVMO) dmxR6 then yields monodictylactone in equilibrium with monodictyphenone. In the case of the cryptosporioptides biosynthesis, monodictylactone is reduced at C-12 to an alcohol (by the short chain dehydrogenases dmxR12 or dmxR8) and hydroxylated at C-5 by dmxR9, yielding the electron-rich aromatic which could eliminate H(2)O to form the ortho-quinonemethide, followed by tautomerisation to paraquinone and complete the formal reduction to produce the 10-methylgroup. Conjugate addition of C-4a-OH to the resulting paraquinone by the monooxygenase dmxR10 then gives cyclohexadienone, which is then reduced at C-5 by the short chain dehydrogenase dmxR3 to give the dihydroxanthone. The 6,7-epoxide in the cryptosporioptides could be introduced by the cytochrome P450 monooxygenase dmxL3. The highly reducing PKS dmxL2 manufactures butyrate, which is further carboxylated by dmxL1 to form ethylmalonate. It is not yet clear whether the carboxylation occurs while the butyrate is attached to the ACP of dmxL2, but this unusual fungal metabolite could then be esterified to O-5 by the O-acetyltransferase dmxR13. Finally, dimerization performed by dmxR5 gives the observed dimers cryptosporioptides A, B and C as the final products of the pathway. The protein is Oxidoreductase dmxR7 of Cryptosporiopsis sp. (strain 8999).